The chain runs to 360 residues: Glutamate 5-kinase (360 aa).

Lys7 serves as a coordination point for ATP. Positions 47, 134, and 146 each coordinate substrate. Residues 166–167 and 208–214 contribute to the ATP site; these read TD and TGGIKTK. Residues 273–344 form the PUA domain; it reads VGEIHLDDGA…IGINSRSETT (72 aa).

The protein belongs to the glutamate 5-kinase family.

The protein localises to the cytoplasm. The catalysed reaction is L-glutamate + ATP = L-glutamyl 5-phosphate + ADP. Its pathway is amino-acid biosynthesis; L-proline biosynthesis; L-glutamate 5-semialdehyde from L-glutamate: step 1/2. Functionally, catalyzes the transfer of a phosphate group to glutamate to form L-glutamate 5-phosphate. The sequence is that of Glutamate 5-kinase from Prochlorococcus marinus (strain NATL2A).